A 458-amino-acid chain; its full sequence is UPF0210 protein Maeo_1412 (458 aa).

This sequence belongs to the UPF0210 family.

This Methanococcus aeolicus (strain ATCC BAA-1280 / DSM 17508 / OCM 812 / Nankai-3) protein is UPF0210 protein Maeo_1412.